The chain runs to 255 residues: 6-phosphogluconolactonase 4 (255 aa).

The protein belongs to the glucosamine/galactosamine-6-phosphate isomerase family. 6-phosphogluconolactonase subfamily.

Its subcellular location is the cytoplasm. It catalyses the reaction 6-phospho-D-glucono-1,5-lactone + H2O = 6-phospho-D-gluconate + H(+). It functions in the pathway carbohydrate degradation; pentose phosphate pathway; D-ribulose 5-phosphate from D-glucose 6-phosphate (oxidative stage): step 2/3. Its function is as follows. Involved in the pentose phosphate pathway via hydrolysis of 6-phosphogluconolactone to 6-phosphogluconate. The chain is 6-phosphogluconolactonase 4 from Saccharomyces cerevisiae (strain ATCC 204508 / S288c) (Baker's yeast).